We begin with the raw amino-acid sequence, 282 residues long: Acetyl-coenzyme A carboxylase carboxyl transferase subunit beta (282 aa).

The 258-residue stretch at 25–282 (LWTKCVSCGE…SSILTMLYRP (258 aa)) folds into the CoA carboxyltransferase N-terminal domain. 4 residues coordinate Zn(2+): cysteine 29, cysteine 32, cysteine 48, and cysteine 51. The C4-type zinc-finger motif lies at 29–51 (CVSCGETIYTKDIENNLNVCPKC).

Belongs to the AccD/PCCB family. As to quaternary structure, acetyl-CoA carboxylase is a heterohexamer composed of biotin carboxyl carrier protein (AccB), biotin carboxylase (AccC) and two subunits each of ACCase subunit alpha (AccA) and ACCase subunit beta (AccD). Zn(2+) is required as a cofactor.

The protein localises to the cytoplasm. The enzyme catalyses N(6)-carboxybiotinyl-L-lysyl-[protein] + acetyl-CoA = N(6)-biotinyl-L-lysyl-[protein] + malonyl-CoA. The protein operates within lipid metabolism; malonyl-CoA biosynthesis; malonyl-CoA from acetyl-CoA: step 1/1. Functionally, component of the acetyl coenzyme A carboxylase (ACC) complex. Biotin carboxylase (BC) catalyzes the carboxylation of biotin on its carrier protein (BCCP) and then the CO(2) group is transferred by the transcarboxylase to acetyl-CoA to form malonyl-CoA. The sequence is that of Acetyl-coenzyme A carboxylase carboxyl transferase subunit beta from Citrifermentans bemidjiense (strain ATCC BAA-1014 / DSM 16622 / JCM 12645 / Bem) (Geobacter bemidjiensis).